A 147-amino-acid polypeptide reads, in one-letter code: Peptide methionine sulfoxide reductase MsrB (147 aa).

Residues Met1 to Phe11 show a composition bias toward basic and acidic residues. The interval Met1–Gln25 is disordered. The region spanning Asp23–Ser145 is the MsrB domain. Zn(2+) contacts are provided by Cys62, Cys65, Cys111, and Cys114. Cys134 serves as the catalytic Nucleophile.

It belongs to the MsrB Met sulfoxide reductase family. Requires Zn(2+) as cofactor.

The catalysed reaction is L-methionyl-[protein] + [thioredoxin]-disulfide + H2O = L-methionyl-(R)-S-oxide-[protein] + [thioredoxin]-dithiol. This chain is Peptide methionine sulfoxide reductase MsrB, found in Vibrio parahaemolyticus serotype O3:K6 (strain RIMD 2210633).